A 510-amino-acid polypeptide reads, in one-letter code: NAD(P)H-quinone oxidoreductase subunit 2 A, chloroplastic (510 aa).

14 consecutive transmembrane segments (helical) span residues 31 to 51, 57 to 77, 99 to 119, 124 to 144, 149 to 169, 184 to 204, 229 to 249, 261 to 281, 295 to 315, 323 to 343, 354 to 374, 395 to 415, 418 to 438, and 484 to 504; these read LIFP…IDLT, IPWL…ALLF, IFQF…VEYI, MAIT…MFLC, LITI…LSGY, LLMG…LYGL, ISIA…LAPF, PTPV…ALAT, WHLL…LIAI, MLAY…IVGD, YMLF…LFGL, ALSL…AGFF, LYLF…IGLL, and MIVC…IIAI.

Belongs to the complex I subunit 2 family. NDH is composed of at least 16 different subunits, 5 of which are encoded in the nucleus.

The protein resides in the plastid. Its subcellular location is the chloroplast thylakoid membrane. It catalyses the reaction a plastoquinone + NADH + (n+1) H(+)(in) = a plastoquinol + NAD(+) + n H(+)(out). The catalysed reaction is a plastoquinone + NADPH + (n+1) H(+)(in) = a plastoquinol + NADP(+) + n H(+)(out). NDH shuttles electrons from NAD(P)H:plastoquinone, via FMN and iron-sulfur (Fe-S) centers, to quinones in the photosynthetic chain and possibly in a chloroplast respiratory chain. The immediate electron acceptor for the enzyme in this species is believed to be plastoquinone. Couples the redox reaction to proton translocation, and thus conserves the redox energy in a proton gradient. This is NAD(P)H-quinone oxidoreductase subunit 2 A, chloroplastic from Nicotiana tabacum (Common tobacco).